We begin with the raw amino-acid sequence, 432 residues long: Phosphomethylpyrimidine synthase (432 aa).

Substrate-binding positions include asparagine 69, methionine 98, tyrosine 127, histidine 163, 185–187, 226–229, and glutamate 265; these read SRG and DACR. A Zn(2+)-binding site is contributed by histidine 269. Tyrosine 292 provides a ligand contact to substrate. Histidine 333 serves as a coordination point for Zn(2+). The [4Fe-4S] cluster site is built by cysteine 409, cysteine 412, and cysteine 416.

Belongs to the ThiC family. The cofactor is [4Fe-4S] cluster.

It catalyses the reaction 5-amino-1-(5-phospho-beta-D-ribosyl)imidazole + S-adenosyl-L-methionine = 4-amino-2-methyl-5-(phosphooxymethyl)pyrimidine + CO + 5'-deoxyadenosine + formate + L-methionine + 3 H(+). It participates in cofactor biosynthesis; thiamine diphosphate biosynthesis. In terms of biological role, catalyzes the synthesis of the hydroxymethylpyrimidine phosphate (HMP-P) moiety of thiamine from aminoimidazole ribotide (AIR) in a radical S-adenosyl-L-methionine (SAM)-dependent reaction. The chain is Phosphomethylpyrimidine synthase from Pelotomaculum thermopropionicum (strain DSM 13744 / JCM 10971 / SI).